The primary structure comprises 192 residues: Potassium-transporting ATPase KdpC subunit (192 aa).

A helical membrane pass occupies residues 7–27 (PLIVLFVVLAALTGLAYPAVM).

Belongs to the KdpC family. The system is composed of three essential subunits: KdpA, KdpB and KdpC.

The protein resides in the cell inner membrane. Its function is as follows. Part of the high-affinity ATP-driven potassium transport (or Kdp) system, which catalyzes the hydrolysis of ATP coupled with the electrogenic transport of potassium into the cytoplasm. This subunit acts as a catalytic chaperone that increases the ATP-binding affinity of the ATP-hydrolyzing subunit KdpB by the formation of a transient KdpB/KdpC/ATP ternary complex. The chain is Potassium-transporting ATPase KdpC subunit from Paraburkholderia xenovorans (strain LB400).